The sequence spans 1337 residues: Partitioning defective 3 homolog (1337 aa).

At serine 25 the chain carries Phosphoserine. Disordered stretches follow at residues 81–109 (EQDP…SELG) and 143–263 (SSDP…LENM). Residue threonine 91 is modified to Phosphothreonine. Residues 91-100 (TSASSTGTQS) show a composition bias toward low complexity. Polar residues-rich tracts occupy residues 150-163 (GLST…FSSE) and 171-188 (TRWS…TGSP). Phosphoserine is present on residues serine 156 and serine 174. Basic and acidic residues predominate over residues 190 to 203 (TCDRKKDENYRSLP). Over residues 207–224 (SSWSNQFQRDNARSSLSA) the composition is skewed to polar residues. The 89-residue stretch at 271 to 359 (MVKLVQVPND…ARVIWFHVVP (89 aa)) folds into the PDZ 1 domain. Serine 383 carries the post-translational modification Phosphoserine. A disordered region spans residues 397 to 441 (NAPQALPRAPRLSQPPEQLDAHPRLPHSAHASTKPPTAPALAPPN). PDZ domains are found at residues 461 to 546 (NIQL…LVFR) and 590 to 677 (EVPL…GMIQ). Tyrosine 489 bears the Phosphotyrosine mark. Phosphoserine is present on residues serine 692, serine 695, serine 715, serine 728, serine 809, and serine 827. The segment at 712-936 (RRISHSLYSG…AAIDKSYDKP (225 aa)) is interaction with PRKCI and PRKCZ. Residue lysine 834 is modified to N6-acetyllysine. At serine 837 the chain carries Phosphoserine. An N6-acetyllysine modification is found at lysine 851. Residues serine 852 and serine 873 each carry the phosphoserine modification. Disordered stretches follow at residues 866 to 888 (VDDQ…KKSS), 932 to 1015 (SYDK…AKKG), 1028 to 1055 (KHRK…DRVR), 1110 to 1271 (LNAR…LGGH), and 1284 to 1337 (LLRQ…PFYS). Lysine 885 is modified (N6-acetyllysine). An interaction with FRMD4A region spans residues 935–1337 (KPMVDDDDEG…TPEKGRPFYS (403 aa)). Acidic residues predominate over residues 939–953 (DDDDEGMETLEEDTE). Phosphoserine; by AURKA is present on serine 962. A phosphoserine mark is found at serine 971 and serine 973. Basic and acidic residues-rich tracts occupy residues 981–1009 (DPEK…EKDK) and 1030–1043 (RKDD…RIKI). The residue at position 1046 (serine 1046) is a Phosphoserine. Residues 1050–1082 (EEDRVRMKEEQERIQAKTREFRERQARERDYAE) are a coiled coil. Over residues 1138–1147 (PGDSNRSTPS) the composition is skewed to polar residues. The span at 1148–1175 (NHDRIQRLRQEFQQAKQDEDVEDRRRTY) shows a compositional bias: basic and acidic residues. 3 coiled-coil regions span residues 1149 to 1172 (HDRI…EDRR), 1199 to 1222 (VQVQ…YSSL), and 1278 to 1299 (MLET…LKKQ). Positions 1180 to 1203 (SWSSSRPASQSGRHSVSVEVQVQR) are enriched in low complexity. The segment covering 1219–1240 (YSSLPRQSRKNASSVSQDSWEQ) has biased composition (polar residues). Basic and acidic residues predominate over residues 1284–1296 (LLRQEQRRKEQQL). Over residues 1318 to 1327 (SQVARLNRLQ) the composition is skewed to polar residues. Basic and acidic residues predominate over residues 1328–1337 (TPEKGRPFYS). Lysine 1331 is subject to N6-acetyllysine.

The protein belongs to the PAR3 family. As to quaternary structure, component of a complex whose core is composed of ARHGAP17, AMOT, PALS1, PATJ and PARD3/PAR3. Interacts (via PDZ 1 domain) with PARD6A, PARD6B and F11R/JAM1. Interacts with AURKA, AURKB and SIRT2. Interacts with PRKCI. Interacts with PRKCZ. Part of a complex with PARD6A or PARD6B, PRKCI or PRKCZ and CDC42 or RAC1. Interacts with LIMK2 and CDH5. Component of the Par polarity complex, composed of at least phosphorylated PRKCZ, PARD3 and TIAM1. Directly interacts with TIAM1 and TIAM2. Interacts with ECT2 and FBF1. Interacts (via PDZ 3 domain) with PTEN (via C-terminus). Interacts (via coiled-coil domain) with FRMD4A. Found in a complex with PARD3, CYTH1 and FRMD4A. Interacts with SAPCD2. Interacts with PRKCA. In terms of assembly, interacts with PRKCZ. In terms of processing, acetylated. Deacetylated by SIRT2, thereby inhibiting Schwann cell peripheral myelination. Phosphorylation at Ser-827 by PRKCZ and PRKCI occurs at the most apical tip of epithelial cell-cell contacts during the initial phase of tight junction formation and may promote dissociation of the complex with PARD6. EGF-induced Tyr-1127 phosphorylation mediates dissociation from LIMK2. Phosphorylation by AURKA at Ser-962 is required for the normal establishment of neuronal polarity. Isoform 1 is predominantly expressed in lung, glandular stomach, prostate, ovary and uterus. Isoform 1 is also expressed in brain, with a high expression in the cortex, hippocampus and in the striatum. Isoform 2 is predominantly expressed in intestinal epithelial cells, kidney and prostate.

Its subcellular location is the cytoplasm. The protein localises to the endomembrane system. It is found in the cell junction. The protein resides in the tight junction. It localises to the adherens junction. Its subcellular location is the cell cortex. The protein localises to the cytoskeleton. It is found in the cell membrane. In terms of biological role, adapter protein involved in asymmetrical cell division and cell polarization processes. Seems to play a central role in the formation of epithelial tight junctions. Association with PARD6B may prevent the interaction of PARD3 with F11R/JAM1, thereby preventing tight junction assembly. The PARD6-PARD3 complex links GTP-bound Rho small GTPases to atypical protein kinase C proteins. Required for establishment of neuronal polarity and normal axon formation in cultured hippocampal neurons. Involved in Schwann cell peripheral myelination. Targets the phosphatase PTEN to cell junctions. The chain is Partitioning defective 3 homolog (Pard3) from Rattus norvegicus (Rat).